A 212-amino-acid polypeptide reads, in one-letter code: Protein GrpE (212 aa).

The interval 1-69 (MAEMSNNKTS…LESAKKEIES (69 aa)) is disordered. Over residues 40 to 60 (ETTQTESMETAETETSLQTEL) the composition is skewed to low complexity.

It belongs to the GrpE family. As to quaternary structure, homodimer.

Its subcellular location is the cytoplasm. Participates actively in the response to hyperosmotic and heat shock by preventing the aggregation of stress-denatured proteins, in association with DnaK and GrpE. It is the nucleotide exchange factor for DnaK and may function as a thermosensor. Unfolded proteins bind initially to DnaJ; upon interaction with the DnaJ-bound protein, DnaK hydrolyzes its bound ATP, resulting in the formation of a stable complex. GrpE releases ADP from DnaK; ATP binding to DnaK triggers the release of the substrate protein, thus completing the reaction cycle. Several rounds of ATP-dependent interactions between DnaJ, DnaK and GrpE are required for fully efficient folding. In Leptospira interrogans serogroup Icterohaemorrhagiae serovar Lai (strain 56601), this protein is Protein GrpE.